Reading from the N-terminus, the 119-residue chain is Small ribosomal subunit protein uS13 (119 aa).

The span at 92–110 shows a compositional bias: basic residues; that stretch reads RKDTCKRSTKKNARTRKGP. Residues 92–119 are disordered; that stretch reads RKDTCKRSTKKNARTRKGPKKDNRWKER.

Belongs to the universal ribosomal protein uS13 family. Part of the 30S ribosomal subunit. Forms a loose heterodimer with protein S19. Forms two bridges to the 50S subunit in the 70S ribosome.

In terms of biological role, located at the top of the head of the 30S subunit, it contacts several helices of the 16S rRNA. In the 70S ribosome it contacts the 23S rRNA (bridge B1a) and protein L5 of the 50S subunit (bridge B1b), connecting the 2 subunits; these bridges are implicated in subunit movement. Contacts the tRNAs in the A and P-sites. This chain is Small ribosomal subunit protein uS13, found in Mycoplasma sp.